Reading from the N-terminus, the 445-residue chain is Phosphoglucosamine mutase (445 aa).

Ser-102 (phosphoserine intermediate) is an active-site residue. Mg(2+)-binding residues include Ser-102, Asp-241, Asp-243, and Asp-245. Ser-102 carries the phosphoserine modification.

The protein belongs to the phosphohexose mutase family. It depends on Mg(2+) as a cofactor. Activated by phosphorylation.

It carries out the reaction alpha-D-glucosamine 1-phosphate = D-glucosamine 6-phosphate. Its function is as follows. Catalyzes the conversion of glucosamine-6-phosphate to glucosamine-1-phosphate. In Haemophilus influenzae (strain PittEE), this protein is Phosphoglucosamine mutase.